Here is a 152-residue protein sequence, read N- to C-terminus: Protein SprT-like (152 aa).

Residues 7 to 147 enclose the SprT-like domain; that stretch reads QRLVEEVSLQ…CGKCKGKLKP (141 aa). His-67 provides a ligand contact to Zn(2+). Residue Glu-68 is part of the active site. Position 71 (His-71) interacts with Zn(2+).

It belongs to the SprT family. Requires Zn(2+) as cofactor.

The protein resides in the cytoplasm. This Bacillus cereus (strain G9842) protein is Protein SprT-like.